The chain runs to 628 residues: 1-deoxy-D-xylulose-5-phosphate synthase (628 aa).

Residues H72 and 113–115 (GHS) each bind thiamine diphosphate. Residue D144 participates in Mg(2+) binding. Thiamine diphosphate-binding positions include 145–146 (GA), N173, Y284, and E363. Position 173 (N173) interacts with Mg(2+).

It belongs to the transketolase family. DXPS subfamily. In terms of assembly, homodimer. It depends on Mg(2+) as a cofactor. Requires thiamine diphosphate as cofactor.

It carries out the reaction D-glyceraldehyde 3-phosphate + pyruvate + H(+) = 1-deoxy-D-xylulose 5-phosphate + CO2. The protein operates within metabolic intermediate biosynthesis; 1-deoxy-D-xylulose 5-phosphate biosynthesis; 1-deoxy-D-xylulose 5-phosphate from D-glyceraldehyde 3-phosphate and pyruvate: step 1/1. Its function is as follows. Catalyzes the acyloin condensation reaction between C atoms 2 and 3 of pyruvate and glyceraldehyde 3-phosphate to yield 1-deoxy-D-xylulose-5-phosphate (DXP). In Brevibacillus brevis (strain 47 / JCM 6285 / NBRC 100599), this protein is 1-deoxy-D-xylulose-5-phosphate synthase.